The sequence spans 1220 residues: von Willebrand factor A domain-containing protein 5B1 (1220 aa).

A signal peptide spans 1–18 (MPGLLNWITGAALPLTAS). The VIT domain occupies 19–149 (DVTSCVSGYA…NVTIFISTSS (131 aa)). Residue N140 is glycosylated (N-linked (GlcNAc...) asparagine). One can recognise a VWFA domain in the interval 361-529 (EFIFLIDRSS…RLQPKMVKSL (169 aa)). N-linked (GlcNAc...) asparagine glycosylation is present at N650. Positions 715–807 (NSGQDLNQGP…SPSRPATPAP (93 aa)) are disordered. Basic and acidic residues predominate over residues 757-774 (VRERTSDSRSPGDLEPSH). Residues 796–807 (RASPSRPATPAP) show a composition bias toward low complexity. Y881 carries the post-translational modification Phosphotyrosine. 2 disordered regions span residues 937-962 (RGTSSGFGRPQTMLGEDSAPGNGKFQ) and 976-995 (EARSPGREKHGASEGPQRSL). Residue N1017 is glycosylated (N-linked (GlcNAc...) asparagine). The span at 1093–1111 (TTRPSESKTPSPQLCTSSP) shows a compositional bias: polar residues. The interval 1093 to 1115 (TTRPSESKTPSPQLCTSSPPRHP) is disordered.

The protein resides in the secreted. This Homo sapiens (Human) protein is von Willebrand factor A domain-containing protein 5B1 (VWA5B1).